The primary structure comprises 529 residues: MDIDGVDDDLHILDPELLQLPGLSPSPLKPTSLIADDLFSQWLSLPETATLVKSLIDDAKSGTPTNKSKNLPSVFLSSSTPPLSPRSSSGSPRFSRQRTSPPSLHSPLRSLKEPKRQLIPQFYYQHGRPPAKELKEQCLSMVDQVFSNYIDGLHVDEFKSITKQVCKLPSFLSPALFRKIDPNCTDIVTRDAFIKYWIDGNMLTMDTASQIYNILRQQGCSYLRQADFKPVLDELLATHPGLEFLRTISEFQERYAETVIYRIFYYINRSGTGCLTLRELRRGNLIAAMQQLDEEDDINKIIRYFSYEHFYVIYCKFWELDGDHDCFIDKDNLIKYGNNALTYRIVDRIFSQIPRKFTSKVEGKMSYEDFVYFILAEEDKSSEPSLEYWFKCVDLDGNGVITSNEMQFFFEEQLHRMECITQEAVLFSDILCQIIDMIGPEKENCITLQDLKGSKLSANVFNILFNLNKFMAFETRDPFLIRQEREDPNLTEWDRFAQREYARLSMEEDVDEVSNGSADVWDEPLEPPF.

The tract at residues 60 to 110 is disordered; sequence KSGTPTNKSKNLPSVFLSSSTPPLSPRSSSGSPRFSRQRTSPPSLHSPLRS. The segment covering 71-109 has biased composition (low complexity); the sequence is LPSVFLSSSTPPLSPRSSSGSPRFSRQRTSPPSLHSPLR. The EF-hand domain maps to 381–416; that stretch reads SSEPSLEYWFKCVDLDGNGVITSNEMQFFFEEQLHR. Ca(2+)-binding residues include aspartate 394, aspartate 396, asparagine 398, and glutamate 405. The segment at 507-529 is disordered; the sequence is EEDVDEVSNGSADVWDEPLEPPF. Residues 520–529 show a composition bias toward acidic residues; it reads VWDEPLEPPF.

PP2A consists of a common heterodimeric core enzyme, composed of a 36 kDa catalytic subunit (subunit C) and a 65 kDa constant regulatory subunit (PR65 or subunit A), that associates with a variety of regulatory subunits. Proteins that associate with the core dimer include three families of regulatory subunits B (the R2/B/PR55/B55, R3/B''/PR72/PR130/PR59 and R5/B'/B56 families) and cell signaling molecules.

Its function is as follows. Probable regulatory subunit of type 2A protein phosphatase. The chain is Probable serine/threonine protein phosphatase 2A regulatory subunit B''epsilon (B''EPSILON) from Arabidopsis thaliana (Mouse-ear cress).